A 475-amino-acid polypeptide reads, in one-letter code: MDYLPVFLNIKQRDCLVVGGGEIAVRKIRLLLRAHARIHVVSPAISEELSNLLLQSPVITHTAESFRPDHLQDRALAIAATNDHEVNRAVSAAARKAGIPVNVVDNPDLCTFIMPSILDRSPIIVAVSSGGTSPILARLLRSRLEALIPSAYGRLAEYAARFRDKVRQRFIHQENRRFFWERMLQGPFAEMVFAGRDQAAQDYLSEALENSTDQFPTGEVYLVGAGPGDPDLLTFRAMRLMQQADVVIYDRLVSPAILDMVRQDATRIYVGKVRNQHTLPQTSINELLVKLAQEGKHVLRLKGGDPFIFGRGGEEIETLSQHHIPFQVVPGITAASGVASYAGIPLTHRDHAQSCVFVTGHLKDNTIQLDWPALARPNQTIVVYMGLLGVTELCRQLIAHGLQATTPAAIVQQGTTPNQRVLTGTLETLPDIIQQNPLKPPTLIIVGNVVKLHQKLAWFNSTSEPMGTSSGPGYP.

Residues 1–204 (MDYLPVFLNI…GRDQAAQDYL (204 aa)) form a precorrin-2 dehydrogenase /sirohydrochlorin ferrochelatase region. NAD(+) contacts are provided by residues 22-23 (EI) and 43-44 (PA). The residue at position 129 (Ser129) is a Phosphoserine. A uroporphyrinogen-III C-methyltransferase region spans residues 218 to 475 (GEVYLVGAGP…MGTSSGPGYP (258 aa)). Residue Pro227 coordinates S-adenosyl-L-methionine. Asp250 (proton acceptor) is an active-site residue. Lys272 functions as the Proton donor in the catalytic mechanism. Residues 303–305 (GGD), Ile308, 333–334 (TA), Met385, and Gly414 each bind S-adenosyl-L-methionine.

The protein in the N-terminal section; belongs to the precorrin-2 dehydrogenase / sirohydrochlorin ferrochelatase family. In the C-terminal section; belongs to the precorrin methyltransferase family.

The catalysed reaction is uroporphyrinogen III + 2 S-adenosyl-L-methionine = precorrin-2 + 2 S-adenosyl-L-homocysteine + H(+). The enzyme catalyses precorrin-2 + NAD(+) = sirohydrochlorin + NADH + 2 H(+). It catalyses the reaction siroheme + 2 H(+) = sirohydrochlorin + Fe(2+). Its pathway is cofactor biosynthesis; adenosylcobalamin biosynthesis; precorrin-2 from uroporphyrinogen III: step 1/1. It functions in the pathway cofactor biosynthesis; adenosylcobalamin biosynthesis; sirohydrochlorin from precorrin-2: step 1/1. The protein operates within porphyrin-containing compound metabolism; siroheme biosynthesis; precorrin-2 from uroporphyrinogen III: step 1/1. It participates in porphyrin-containing compound metabolism; siroheme biosynthesis; siroheme from sirohydrochlorin: step 1/1. Its pathway is porphyrin-containing compound metabolism; siroheme biosynthesis; sirohydrochlorin from precorrin-2: step 1/1. Multifunctional enzyme that catalyzes the SAM-dependent methylations of uroporphyrinogen III at position C-2 and C-7 to form precorrin-2 via precorrin-1. Then it catalyzes the NAD-dependent ring dehydrogenation of precorrin-2 to yield sirohydrochlorin. Finally, it catalyzes the ferrochelation of sirohydrochlorin to yield siroheme. This is Siroheme synthase from Nitrosomonas europaea (strain ATCC 19718 / CIP 103999 / KCTC 2705 / NBRC 14298).